The chain runs to 368 residues: UDP-N-acetylglucosamine--N-acetylmuramyl-(pentapeptide) pyrophosphoryl-undecaprenol N-acetylglucosamine transferase (368 aa).

Residues 13–15 (TGG), Asn127, Arg168, Ser200, Ile254, and Gln299 contribute to the UDP-N-acetyl-alpha-D-glucosamine site.

The protein belongs to the glycosyltransferase 28 family. MurG subfamily.

It is found in the cell inner membrane. It carries out the reaction di-trans,octa-cis-undecaprenyl diphospho-N-acetyl-alpha-D-muramoyl-L-alanyl-D-glutamyl-meso-2,6-diaminopimeloyl-D-alanyl-D-alanine + UDP-N-acetyl-alpha-D-glucosamine = di-trans,octa-cis-undecaprenyl diphospho-[N-acetyl-alpha-D-glucosaminyl-(1-&gt;4)]-N-acetyl-alpha-D-muramoyl-L-alanyl-D-glutamyl-meso-2,6-diaminopimeloyl-D-alanyl-D-alanine + UDP + H(+). It functions in the pathway cell wall biogenesis; peptidoglycan biosynthesis. Functionally, cell wall formation. Catalyzes the transfer of a GlcNAc subunit on undecaprenyl-pyrophosphoryl-MurNAc-pentapeptide (lipid intermediate I) to form undecaprenyl-pyrophosphoryl-MurNAc-(pentapeptide)GlcNAc (lipid intermediate II). In Parabacteroides distasonis (strain ATCC 8503 / DSM 20701 / CIP 104284 / JCM 5825 / NCTC 11152), this protein is UDP-N-acetylglucosamine--N-acetylmuramyl-(pentapeptide) pyrophosphoryl-undecaprenol N-acetylglucosamine transferase.